The chain runs to 426 residues: UDP-N-acetylglucosamine 1-carboxyvinyltransferase (426 aa).

Position 22–23 (22–23 (KN)) interacts with phosphoenolpyruvate. Position 93 (Arg-93) interacts with UDP-N-acetyl-alpha-D-glucosamine. Catalysis depends on Cys-117, which acts as the Proton donor. Cys-117 is modified (2-(S-cysteinyl)pyruvic acid O-phosphothioketal). UDP-N-acetyl-alpha-D-glucosamine contacts are provided by residues 162-165 (KVSV), Asp-307, and Ile-329.

Belongs to the EPSP synthase family. MurA subfamily.

Its subcellular location is the cytoplasm. The catalysed reaction is phosphoenolpyruvate + UDP-N-acetyl-alpha-D-glucosamine = UDP-N-acetyl-3-O-(1-carboxyvinyl)-alpha-D-glucosamine + phosphate. The protein operates within cell wall biogenesis; peptidoglycan biosynthesis. Functionally, cell wall formation. Adds enolpyruvyl to UDP-N-acetylglucosamine. This Haemophilus ducreyi (strain 35000HP / ATCC 700724) protein is UDP-N-acetylglucosamine 1-carboxyvinyltransferase.